The chain runs to 65 residues: Omega-lycotoxin-Am1f (65 aa).

A propeptide spanning residues 1-18 (GDEEDEVEETLPVAEEGR) is cleaved from the precursor. 4 disulfide bridges follow: Cys22/Cys37, Cys29/Cys42, Cys36/Cys62, and Cys44/Cys60.

Belongs to the neurotoxin omega-lctx family. Expressed by the venom gland.

It localises to the secreted. Its function is as follows. Modulates Cav2.1/CACNA1A voltage-gated calcium channels (P/Q-type currents) in rat cerebellar Purkinje cells and hippocampal CA1-CA3 neurons. At saturating concentrations (&gt;10 nM) decelerates activation kinetics and slightly increases peak amplitude without affecting deactivation kinetics. In vivo, does not cause death when intravenously injected into mice. In rat models, through its activity on Cav2.1/CACNA1A, has an ameliorative effect on memory defects provoked by hyperstimulation of N-methyl-D-aspartate receptors (NMDARs) in the hippocampus. This Alopecosa marikovskyi (Wolf spider) protein is Omega-lycotoxin-Am1f.